Reading from the N-terminus, the 434-residue chain is MAMQKIFAREILDSRGNPTVEVDLHTAKGRFRAAVPSGASTGIYEALELRDGDKSRYLGKGVLKAVEHINKTLGPALLEKKLSVVDQEKVDKFMIELDGTENKSKFGANAILGVSLAVCKAGAAEKGVPLYRHIADLAGNPELILPVPAFNVINGGSHAGNKLAMQEFMILPVGASSFREAMRIGAEVYHHLKGVIKAKYGKDATNVGDEGGFAPNILENNEALELLKTAIQAAGYPDKVVIGMDVAASEFYRNGKYDLDFKSPDDPARHISGEKLGELYKNFIKNYPVVSIEDPFDQDDWATWTSFLSGVNIQIVGDDLTVTNPKRIAQAVEKKACNCLLLKVNQIGSVTESIQACKLAQSNGWGVMVSHRSGETEDTFIADLVVGLCTGQIKTGAPCRSERLAKYNQLMRIEEALGDKAVFAGRKFRNPKAK.

A2 carries the N-acetylalanine modification. Position 72 is a phosphothreonine (T72). A phosphoserine mark is found at S83 and S157. Substrate-binding residues include H158 and E167. A Phosphoserine modification is found at S176. At T205 the chain carries Phosphothreonine. E210 (proton donor) is an active-site residue. The residue at position 229 (T229) is a Phosphothreonine. Y236 carries the phosphotyrosine modification. D245 provides a ligand contact to Mg(2+). The residue at position 263 (S263) is a Phosphoserine. Substrate contacts are provided by E293 and D318. Mg(2+) is bound by residues E293 and D318. K343 functions as the Proton acceptor in the catalytic mechanism. Residues 370–373 and K394 contribute to the substrate site; that span reads SHRS.

Belongs to the enolase family. In terms of assembly, mammalian enolase is composed of 3 isozyme subunits, alpha, beta and gamma, which can form homodimers or heterodimers which are cell-type and development-specific. Interacts with PNKD. Requires Mg(2+) as cofactor.

It localises to the cytoplasm. The enzyme catalyses (2R)-2-phosphoglycerate = phosphoenolpyruvate + H2O. It participates in carbohydrate degradation; glycolysis; pyruvate from D-glyceraldehyde 3-phosphate: step 4/5. In terms of biological role, glycolytic enzyme that catalyzes the conversion of 2-phosphoglycerate to phosphoenolpyruvate. Appears to have a function in striated muscle development and regeneration. This chain is Beta-enolase (ENO3), found in Bos taurus (Bovine).